Here is an 823-residue protein sequence, read N- to C-terminus: Nuclear factor I family protein (823 aa).

The disordered stretch occupies residues 1–56; sequence MEPHLKIDVSSASGSTTTGATASTSEAPQDSQAQQTMPPPSSDWSNQFNSPEAVSP. The span at 10-25 shows a compositional bias: low complexity; that stretch reads SSASGSTTTGATASTS. The span at 26–52 shows a compositional bias: polar residues; it reads EAPQDSQAQQTMPPPSSDWSNQFNSPE. A DNA-binding region (CTF/NF-I) is located at residues 61 to 253; the sequence is IKCFSPYSQE…DVDTKITLTY (193 aa). 3 disordered regions span residues 364–408, 433–468, and 777–823; these read PYPI…NDEV, SRTQQNQGAPGTSRQVRPLPDFQSQDSARSPGAFRS, and APPA…NEKK. Residues 386–396 show a composition bias toward basic and acidic residues; it reads PSEKRSRDISS. The segment covering 433–447 has biased composition (polar residues); the sequence is SRTQQNQGAPGTSRQ. Low complexity predominate over residues 777 to 794; the sequence is APPACSPSSSNSSLGAAN.

It belongs to the CTF/NF-I family. In terms of tissue distribution, expressed in muscles, neurons and intestinal cells.

Its subcellular location is the nucleus. Its function is as follows. Probable transcription factor which recognizes and binds the palindromic sequence 5'-TTGGCANNNTGCCAA-3' present in promoters. Plays a role in locomotion, pharyngeal pumping, egg-laying, and life span. The polypeptide is Nuclear factor I family protein (Caenorhabditis elegans).